We begin with the raw amino-acid sequence, 58 residues long: Large ribosomal subunit protein eL37 (58 aa).

Positions 20, 23, 35, and 38 each coordinate Zn(2+). The segment at 20 to 38 (CRRCGEKSYHVKKERCSSC) adopts a C4-type zinc-finger fold. A disordered region spans residues 39 to 58 (GFGDSASRRGYAWQSKSGDN).

Belongs to the eukaryotic ribosomal protein eL37 family. It depends on Zn(2+) as a cofactor.

Binds to the 23S rRNA. This is Large ribosomal subunit protein eL37 from Halorubrum lacusprofundi (strain ATCC 49239 / DSM 5036 / JCM 8891 / ACAM 34).